A 514-amino-acid chain; its full sequence is Developmental and secondary metabolism regulator veA (514 aa).

The Velvet domain occupies 26–218; that stretch reads NRHLWYQLTV…ADQGCHVRIR (193 aa). The Nuclear localization signal signature appears at 40–45; it reads ERARAC. Residues 219–463 are disordered; the sequence is RDVRMRKRDA…PIGSKRKHDQ (245 aa). A compositionally biased stretch (basic and acidic residues) spans 228-243; it reads AKSNNGRDRREDDMAR. A compositionally biased stretch (low complexity) spans 256-267; the sequence is SAAARARSMSNS. Polar residues predominate over residues 386–396; sequence SYPSTPVSSHP. A PEST region spans residues 411 to 448; it reads KSPSNSVSPSNSSLKITDLLVQPLPSSEPKLEVGSAPC. Low complexity predominate over residues 412 to 423; sequence SPSNSVSPSNSS.

It belongs to the velvet family. VeA subfamily. As to quaternary structure, component of the heterotrimeric velvet complex composed of laeA, veA and velB; VeA acting as a bridging protein between laeA and velB.

It is found in the nucleus. It localises to the cytoplasm. Its function is as follows. Component of the velvet transcription factor complex that controls sexual/asexual developmental ratio in response to light, promoting sexual development in the darkness while stimulating asexual sporulation under illumination. The velvet complex hat acts as a global regulator for secondary metabolite gene expression. Controls the expression of the cephalosporin C gene cluster. Regulates hyphal fragmentation. This chain is Developmental and secondary metabolism regulator veA, found in Hapsidospora chrysogenum (strain ATCC 11550 / CBS 779.69 / DSM 880 / IAM 14645 / JCM 23072 / IMI 49137) (Acremonium chrysogenum).